Reading from the N-terminus, the 341-residue chain is Transcription factor ETV7 (341 aa).

One can recognise a PNT domain in the interval 33-117; it reads NLLGEGGICK…ELLQYIKTQR (85 aa). The ETS DNA-binding region spans 224-305; the sequence is RLLWDYVYQL…PGQKLLFRFL (82 aa). Residues 315–341 are disordered; that stretch reads KHSHLEPLESQEQDRIEFKDKRPEISP.

It belongs to the ETS family. As to expression, expressed in hematopoietic tissues.

Its subcellular location is the nucleus. In terms of biological role, transcriptional repressor; binds to the DNA sequence 5'-CCGGAAGT-3'. Isoform A does not seem to have a repressor activity. Isoform C does not seem to have a repressor activity. The chain is Transcription factor ETV7 (ETV7) from Homo sapiens (Human).